Here is a 273-residue protein sequence, read N- to C-terminus: Shikimate dehydrogenase (NADP(+)) (273 aa).

Shikimate-binding positions include serine 18–serine 20 and threonine 65. Lysine 69 functions as the Proton acceptor in the catalytic mechanism. Glutamate 81 contacts NADP(+). The shikimate site is built by asparagine 90 and aspartate 105. NADP(+)-binding positions include glycine 130–alanine 134, asparagine 154–lysine 159, and methionine 217. Tyrosine 219 is a shikimate binding site. Position 240 (glycine 240) interacts with NADP(+).

Belongs to the shikimate dehydrogenase family. Homodimer.

It carries out the reaction shikimate + NADP(+) = 3-dehydroshikimate + NADPH + H(+). The protein operates within metabolic intermediate biosynthesis; chorismate biosynthesis; chorismate from D-erythrose 4-phosphate and phosphoenolpyruvate: step 4/7. Involved in the biosynthesis of the chorismate, which leads to the biosynthesis of aromatic amino acids. Catalyzes the reversible NADPH linked reduction of 3-dehydroshikimate (DHSA) to yield shikimate (SA). The polypeptide is Shikimate dehydrogenase (NADP(+)) (Janthinobacterium sp. (strain Marseille) (Minibacterium massiliensis)).